A 2800-amino-acid polypeptide reads, in one-letter code: Probable serine/threonine-protein kinase roco5 (2800 aa).

Over residues 1–61 (MEVIKKEKKD…EKEKDKEKDG (61 aa)) the composition is skewed to basic and acidic residues. Disordered regions lie at residues 1–92 (MEVI…SAQS), 123–225 (TTTT…SPVD), and 417–437 (GINS…SSGI). Pro residues predominate over residues 77–86 (PTPPPPPPPS). 2 stretches are compositionally biased toward low complexity: residues 123 to 134 (TTTTTTTTSSNN) and 143 to 170 (NNNT…SSNN). The span at 176–190 (INVTSLDSGGNNNAS) shows a compositional bias: polar residues. Over residues 194 to 218 (ISNEHSPKNRKEKEKEKDKDNKEDS) the composition is skewed to basic and acidic residues. The DH domain occupies 227–508 (NRRKLVEGFM…VQVVKDIVNE (282 aa)). The segment covering 417-429 (GINSANSNNNNNN) has biased composition (low complexity). Residues 540–649 (KFLKEGILIE…WFQVLSQASL (110 aa)) enclose the PH domain. 4 LRR repeats span residues 777-800 (NKSI…ALGD), 805-832 (NHSL…GILS), 834-856 (PSIT…HISK), and 861-885 (NQTL…IIDQ). Positions 926–946 (KQLQVNQKSTTPSTSTSTTSS) are disordered. Residues 934–946 (STTPSTSTSTTSS) show a composition bias toward low complexity. LRR repeat units follow at residues 971 to 984 (LNKL…SRRI), 985 to 1007 (SDLK…ILKE), 1008 to 1031 (LKNL…ISEM), 1033 to 1056 (ELKL…TLCK), 1058 to 1077 (NHLD…SLSQ), 1078 to 1101 (LVNL…IFTR), 1128 to 1151 (AIKA…IGSI), 1152 to 1174 (SSLI…IGKL), 1175 to 1197 (SSLQ…LSQL), and 1199 to 1222 (TLKV…KISI). The Roc domain occupies 1244–1464 (KEKPCMRMKL…NHIVKLGKAE (221 aa)). GTP contacts are provided by residues 1257–1264 (GQENVGKT), 1348–1352 (DFAGQ), and 1407–1410 (THLD). The region spanning 1473–1604 (RSYFQLENLI…KFEIVHPLPD (132 aa)) is the COR 1 domain. 2 disordered regions span residues 1605-1665 (PKAT…SLLN) and 1688-1711 (DQST…FSDS). 3 stretches are compositionally biased toward low complexity: residues 1610–1645 (SSSS…SSTT), 1653–1665 (RTNS…SLLN), and 1688–1707 (DQST…SSNN). Residues 1717–1790 (KSSTKHLVPI…VKEFWKNGLL (74 aa)) form the COR 2 domain. The segment covering 1886–2008 (SQQQHHQQQQ…LNPDSTSSSN (123 aa)) has biased composition (low complexity). Disordered regions lie at residues 1886–2011 (SQQQ…NETS) and 2050–2070 (RNTN…SSIV). Polar residues predominate over residues 2050 to 2059 (RNTNKPKING). The Protein kinase domain maps to 2175-2440 (LEIIEKVGEG…PTFIDIHSRL (266 aa)). ATP-binding positions include 2181 to 2189 (VGEGGFGIV) and Lys2202. Residue Asp2300 is the Proton acceptor of the active site. 4 stretches are compositionally biased toward low complexity: residues 2452-2490 (TTTN…GTTS), 2583-2654 (LKTP…SPIS), 2669-2685 (TTQT…PNPT), and 2694-2704 (SSLSSNSINKP). Disordered stretches follow at residues 2452 to 2498 (TTTN…HPQL) and 2544 to 2800 (AGGN…AIPK). The span at 2705–2723 (PSKPLPTPGGVTSPPPPPT) shows a compositional bias: pro residues. Residues 2730 to 2756 (IKFNSISAGNKTIGQSSTLPSSTLKQF) show a composition bias toward polar residues. Positions 2757-2787 (TANNNTSPSGSSSLPNSTVSSPSSSFLLRPT) are enriched in low complexity.

This sequence belongs to the protein kinase superfamily. TKL Ser/Thr protein kinase family. ROCO subfamily.

The catalysed reaction is L-seryl-[protein] + ATP = O-phospho-L-seryl-[protein] + ADP + H(+). It carries out the reaction L-threonyl-[protein] + ATP = O-phospho-L-threonyl-[protein] + ADP + H(+). Its function is as follows. May act as a serine/threonine-protein kinase and guanine-nucleotide releasing factor. This Dictyostelium discoideum (Social amoeba) protein is Probable serine/threonine-protein kinase roco5 (roco5).